The chain runs to 264 residues: Small ribosomal subunit protein uS3 (264 aa).

In terms of domain architecture, KH type-2 spans 39 to 107 (VREFLKKKLK…PVHVNIEEIR (69 aa)). The tract at residues 211 to 264 (NDAPVVEEPQEERRKRPGRPEGRRREGEGRPGGQRRGAGAGGRRSGGADAKTGE) is disordered. Residues 221-239 (EERRKRPGRPEGRRREGEG) show a composition bias toward basic and acidic residues. The span at 240 to 255 (RPGGQRRGAGAGGRRS) shows a compositional bias: gly residues.

It belongs to the universal ribosomal protein uS3 family. As to quaternary structure, part of the 30S ribosomal subunit. Forms a tight complex with proteins S10 and S14.

Binds the lower part of the 30S subunit head. Binds mRNA in the 70S ribosome, positioning it for translation. In Ralstonia nicotianae (strain ATCC BAA-1114 / GMI1000) (Ralstonia solanacearum), this protein is Small ribosomal subunit protein uS3.